Consider the following 64-residue polypeptide: MPKMKTKSAAAKRFKTTKSGKIKRKQAYTSHLAPNKTTKQKRHLRKDGLVHKTDFKRIKQLIAK.

Positions M1–Q26 are enriched in basic residues. The tract at residues M1–K46 is disordered.

The protein belongs to the bacterial ribosomal protein bL35 family.

In Mycoplasmoides gallisepticum (strain R(low / passage 15 / clone 2)) (Mycoplasma gallisepticum), this protein is Large ribosomal subunit protein bL35.